We begin with the raw amino-acid sequence, 444 residues long: IMP-specific 5'-nucleotidase 1 (444 aa).

Residues K132 and H150 each contribute to the ATP site. Residue D170 is the Nucleophile of the active site. IMP-binding residues include D170, D172, D178, T204, S207, S308, D363, and K371. Mg(2+) contacts are provided by D170 and D172. D172 (proton donor) is an active-site residue. D394 serves as a coordination point for Mg(2+).

This sequence belongs to the ISN1 family. Homotetramer. Requires Mg(2+) as cofactor.

It is found in the cytoplasm. The catalysed reaction is IMP + H2O = inosine + phosphate. At physiological pH, allosterically activated by ATP. ATP binding is a prerequisite to magnesium and substrate binding. ATP binds to 2 of the subunits in the homotetramer inducing a closure of these 2 subunits and the release of the C-terminal loop, thereby activating the enzyme. In this conformation, the enzyme can bind IMP and magnesium which ultimately leads to the release of ATP. At pH 5, ATP does not have an allosteric role and is dispensable for magnesium and substrate binding. Inhibited by phosphocholine and D-myo-inositol-4-phosphate. In terms of biological role, specifically, catalyzes the dephosphorylation of inosine monophosphate (IMP) into inosine. By dephosphorylating IMP, plays a role in the purine salvage pathway. Does not have phosphotransferase activity with IMP as phosphate donor and adenosine as phosphate acceptor. The sequence is that of IMP-specific 5'-nucleotidase 1 from Plasmodium falciparum (isolate 3D7).